The primary structure comprises 446 residues: Phosphoglucosamine mutase (446 aa).

Ser-102 acts as the Phosphoserine intermediate in catalysis. Mg(2+) contacts are provided by Ser-102, Asp-239, Asp-241, and Asp-243. Phosphoserine is present on Ser-102.

This sequence belongs to the phosphohexose mutase family. Mg(2+) serves as cofactor. Post-translationally, activated by phosphorylation.

It catalyses the reaction alpha-D-glucosamine 1-phosphate = D-glucosamine 6-phosphate. Catalyzes the conversion of glucosamine-6-phosphate to glucosamine-1-phosphate. The polypeptide is Phosphoglucosamine mutase (Solibacter usitatus (strain Ellin6076)).